Reading from the N-terminus, the 220-residue chain is Type-4 uracil-DNA glycosylase (220 aa).

[4Fe-4S] cluster contacts are provided by cysteine 14 and cysteine 17. Residues 41–43 (GEA), phenylalanine 55, and asparagine 82 contribute to the uracil site. Residues cysteine 86 and cysteine 102 each contribute to the [4Fe-4S] cluster site. A uracil-binding site is contributed by histidine 164.

It belongs to the uracil-DNA glycosylase (UDG) superfamily. Type 4 (UDGa) family.

It catalyses the reaction Hydrolyzes single-stranded DNA or mismatched double-stranded DNA and polynucleotides, releasing free uracil.. In terms of biological role, removes uracil bases that are present in DNA as a result of either deamination of cytosine or misincorporation of dUMP instead of dTMP. This is Type-4 uracil-DNA glycosylase from Sulfurisphaera tokodaii (strain DSM 16993 / JCM 10545 / NBRC 100140 / 7) (Sulfolobus tokodaii).